Here is a 355-residue protein sequence, read N- to C-terminus: Probable low-specificity L-threonine aldolase 2 (355 aa).

K211 is modified (N6-(pyridoxal phosphate)lysine).

It belongs to the threonine aldolase family. It depends on pyridoxal 5'-phosphate as a cofactor. Expressed in roots, leaf vasculature and flowers.

The catalysed reaction is L-threonine = acetaldehyde + glycine. It carries out the reaction L-allo-threonine = acetaldehyde + glycine. It participates in amino-acid degradation; L-threonine degradation via aldolase pathway; acetaldehyde and glycine from L-threonine: step 1/1. In terms of biological role, threonine aldolase involved in threonine degradation to glycine. May play a role in the removal of L-allo-threonine. The chain is Probable low-specificity L-threonine aldolase 2 (THA2) from Arabidopsis thaliana (Mouse-ear cress).